We begin with the raw amino-acid sequence, 29 residues long: Chassatide C10 (29 aa).

The cyclopeptide (Gly-Asn) cross-link spans 1–29 (GEYCGESCYLIPCFTPGCYCVSRQCVNKN). Cystine bridges form between Cys-4–Cys-18, Cys-8–Cys-20, and Cys-13–Cys-25.

This is a cyclic peptide.

In terms of biological role, probably participates in a plant defense mechanism. Has no activity against bacteria up to a concentration of 80 uM. Has cytotoxic but no hemolytic activity. This Chassalia chartacea (Chassalia curviflora) protein is Chassatide C10.